The chain runs to 218 residues: Protein GrpE (218 aa).

The tract at residues Met-1–Gly-78 is disordered. Low complexity predominate over residues Pro-14–Ala-58.

It belongs to the GrpE family. As to quaternary structure, homodimer.

It localises to the cytoplasm. Participates actively in the response to hyperosmotic and heat shock by preventing the aggregation of stress-denatured proteins, in association with DnaK and GrpE. It is the nucleotide exchange factor for DnaK and may function as a thermosensor. Unfolded proteins bind initially to DnaJ; upon interaction with the DnaJ-bound protein, DnaK hydrolyzes its bound ATP, resulting in the formation of a stable complex. GrpE releases ADP from DnaK; ATP binding to DnaK triggers the release of the substrate protein, thus completing the reaction cycle. Several rounds of ATP-dependent interactions between DnaJ, DnaK and GrpE are required for fully efficient folding. This chain is Protein GrpE, found in Bifidobacterium longum (strain NCC 2705).